Consider the following 1486-residue polypeptide: Chromosome partition protein MukB (1486 aa).

34-41 is an ATP binding site; sequence GGNGAGKS. Coiled coils occupy residues 326–418, 444–480, and 509–603; these read LEAD…QYNQ, LETF…QAYQ, and RHLA…RAPV. The segment at 666 to 783 is flexible hinge; sequence PGGSEDQRLN…EVPLFGRAAR (118 aa). 3 coiled-coil regions span residues 835-923, 977-1115, and 1209-1266; these read EAEI…AKLE, EMLS…TAKA, and VEAI…QNVS.

Belongs to the SMC family. MukB subfamily. Homodimerization via its hinge domain. Binds to DNA via its C-terminal region. Interacts, and probably forms a ternary complex, with MukE and MukF via its C-terminal region. The complex formation is stimulated by calcium or magnesium. Interacts with tubulin-related protein FtsZ.

Its subcellular location is the cytoplasm. The protein resides in the nucleoid. Plays a central role in chromosome condensation, segregation and cell cycle progression. Functions as a homodimer, which is essential for chromosome partition. Involved in negative DNA supercoiling in vivo, and by this means organize and compact chromosomes. May achieve or facilitate chromosome segregation by condensation DNA from both sides of a centrally located replisome during cell division. The protein is Chromosome partition protein MukB of Escherichia coli O81 (strain ED1a).